The following is a 175-amino-acid chain: NADH-quinone oxidoreductase subunit B (175 aa).

[4Fe-4S] cluster-binding residues include Cys54, Cys55, Cys119, and Cys149.

Belongs to the complex I 20 kDa subunit family. As to quaternary structure, NDH-1 is composed of at least 14 different subunits, Nqo1 to Nqo14. The complex has a L-shaped structure, with the hydrophobic arm (subunits Nqo7, Nqo8, Nqo10 to Nqo14) embedded in the inner membrane and the hydrophilic peripheral arm (subunits Nqo1 to Nqo6, Nqo9) protruding into the bacterial cytoplasm. The hydrophilic domain contains all the redox centers. NADH-quinone oxidoreductase forms a supercomplex with ubiquinol-cytochrome c reductase complex (complex III or cytochrome b-c1 complex) and cytochrome c oxidase (complex IV), which stabilizes the NADH-quinone oxidoreductase complex. The cofactor is [4Fe-4S] cluster.

Its subcellular location is the cell inner membrane. It catalyses the reaction a quinone + NADH + 5 H(+)(in) = a quinol + NAD(+) + 4 H(+)(out). NDH-1 shuttles electrons from NADH, via FMN and iron-sulfur (Fe-S) centers, to quinones in the respiratory chain. The immediate electron acceptor for the enzyme in this species is believed to be ubiquinone. Couples the redox reaction to proton translocation (for every two electrons transferred, four hydrogen ions are translocated across the cytoplasmic membrane), and thus conserves the redox energy in a proton gradient. This Paracoccus denitrificans (strain Pd 1222) protein is NADH-quinone oxidoreductase subunit B.